The chain runs to 102 residues: Amoebiasin-1 (102 aa).

The BC loop motif lies at 27–32; the sequence is NPTTGY. The short motif at 51–61 is the DE loop element; it reads DQHAPGICGCG. Positions 85 to 93 match the FG loop motif; the sequence is PWAPNANDR.

It belongs to the protease inhibitor I42 family. In terms of assembly, monomer. During oxidative conditions, forms homooligomers; disulfide-linked. Interacts with cysteine protease CP2. Interacts with cysteine protease CP5. During oxidative conditions, cys-39, cys-58 and cys-60 react to form intra- and inter-molecular disulfide bonds resulting in the loss of the protein inhibitory activity.

It is found in the cytoplasm. Its function is as follows. Cysteine protease inhibitor. Inhibits cysteine proteases CP1, CP2 and CP5. May protect the cytosol against cysteine proteases released by damaged intracellular vesicles. The polypeptide is Amoebiasin-1 (Entamoeba histolytica (strain ATCC 30459 / HM-1:IMSS / ABRM)).